Reading from the N-terminus, the 437-residue chain is O-antigen export system ATP-binding protein RfbB (437 aa).

The region spanning 37-256 (LRGKRQSRDA…YREAISLAEA (220 aa)) is the ABC transporter domain. Residue 69–76 (GRNGSGKS) participates in ATP binding.

It belongs to the ABC transporter superfamily.

The protein resides in the cell inner membrane. Its function is as follows. May form an ATP-driven O-antigen export apparatus, in association with RfbA. The protein is O-antigen export system ATP-binding protein RfbB (rfbB) of Myxococcus xanthus.